The primary structure comprises 447 residues: N-succinylarginine dihydrolase (447 aa).

Residues 19-28, asparagine 110, and 137-138 contribute to the substrate site; these read AGLSFGNEAS and HR. The active site involves glutamate 174. Arginine 212 is a substrate binding site. Histidine 248 is an active-site residue. The substrate site is built by aspartate 250 and asparagine 359. The Nucleophile role is filled by cysteine 365.

It belongs to the succinylarginine dihydrolase family. In terms of assembly, homodimer.

The enzyme catalyses N(2)-succinyl-L-arginine + 2 H2O + 2 H(+) = N(2)-succinyl-L-ornithine + 2 NH4(+) + CO2. The protein operates within amino-acid degradation; L-arginine degradation via AST pathway; L-glutamate and succinate from L-arginine: step 2/5. In terms of biological role, catalyzes the hydrolysis of N(2)-succinylarginine into N(2)-succinylornithine, ammonia and CO(2). The protein is N-succinylarginine dihydrolase of Escherichia coli O6:H1 (strain CFT073 / ATCC 700928 / UPEC).